The following is a 493-amino-acid chain: Cysteine--tRNA ligase (493 aa).

C29 contributes to the Zn(2+) binding site. Residues 31–41 carry the 'HIGH' region motif; the sequence is VTVYDYCHIGH. Positions 209, 234, and 238 each coordinate Zn(2+). A 'KMSKS' region motif is present at residues 266–270; it reads KMSKS. K269 serves as a coordination point for ATP.

It belongs to the class-I aminoacyl-tRNA synthetase family. In terms of assembly, monomer. The cofactor is Zn(2+).

The protein localises to the cytoplasm. The catalysed reaction is tRNA(Cys) + L-cysteine + ATP = L-cysteinyl-tRNA(Cys) + AMP + diphosphate. The protein is Cysteine--tRNA ligase of Pelobacter propionicus (strain DSM 2379 / NBRC 103807 / OttBd1).